A 619-amino-acid chain; its full sequence is Pescadillo homolog (619 aa).

Residues 303–324 (ADKDQKDQDTIEDAEEVTEPTV) are disordered. A compositionally biased stretch (acidic residues) spans 312–324 (TIEDAEEVTEPTV). In terms of domain architecture, BRCT spans 353–452 (PTSQLFSKFI…ELVSVGDYAP (100 aa)). Residues 456-567 (LPPHLSPWGD…STKAALTPEE (112 aa)) are disordered. 2 coiled-coil regions span residues 472–560 (NAKA…ASTK) and 588–619 (MQYG…LKDV). Residues 480-522 (EAEEEEEEEEEDEEEEEEEEEIEVADGDEDQDDEEEEEIEDED) are compositionally biased toward acidic residues. Residues 523-539 (LKAQKELEMEVAGKKFS) show a composition bias toward basic and acidic residues.

It belongs to the pescadillo family. Component of the NOP7 complex, composed of ERB1, NOP7 and YTM1. The complex is held together by ERB1, which interacts with NOP7 via its N-terminal domain and with YTM1 via a high-affinity interaction between the seven-bladed beta-propeller domains of the 2 proteins. The NOP7 complex associates with the 66S pre-ribosome.

It localises to the nucleus. The protein localises to the nucleolus. It is found in the nucleoplasm. Component of the NOP7 complex, which is required for maturation of the 25S and 5.8S ribosomal RNAs and formation of the 60S ribosome. The polypeptide is Pescadillo homolog (Lodderomyces elongisporus (strain ATCC 11503 / CBS 2605 / JCM 1781 / NBRC 1676 / NRRL YB-4239) (Yeast)).